The chain runs to 195 residues: Phosphoheptose isomerase (195 aa).

Residues 36-195 (LVDSLKGDGI…IIEKELFGLD (160 aa)) form the SIS domain. 51 to 53 (NGG) contributes to the substrate binding site. Zn(2+)-binding residues include His-60 and Glu-64. Substrate-binding positions include Glu-64, 95-96 (ND), 121-123 (TTS), Ser-126, and Gln-173. 2 residues coordinate Zn(2+): Gln-173 and His-181.

Belongs to the SIS family. GmhA subfamily. Requires Zn(2+) as cofactor.

It is found in the cytoplasm. The catalysed reaction is 2 D-sedoheptulose 7-phosphate = D-glycero-alpha-D-manno-heptose 7-phosphate + D-glycero-beta-D-manno-heptose 7-phosphate. It participates in carbohydrate biosynthesis; D-glycero-D-manno-heptose 7-phosphate biosynthesis; D-glycero-alpha-D-manno-heptose 7-phosphate and D-glycero-beta-D-manno-heptose 7-phosphate from sedoheptulose 7-phosphate: step 1/1. Its function is as follows. Catalyzes the isomerization of sedoheptulose 7-phosphate in D-glycero-D-manno-heptose 7-phosphate. This is Phosphoheptose isomerase from Leptospira biflexa serovar Patoc (strain Patoc 1 / Ames).